Consider the following 456-residue polypeptide: D-glycerate 3-kinase, chloroplastic (456 aa).

The transit peptide at 1–63 (MAVAISGSSL…KFNDHVVNPS (63 aa)) directs the protein to the chloroplast. Residue 215–222 (APQGCGKT) coordinates ATP.

This sequence belongs to the GLYK kinase family.

The protein resides in the plastid. The protein localises to the chloroplast. It localises to the cytoplasm. The enzyme catalyses (R)-glycerate + ATP = (2R)-3-phosphoglycerate + ADP + H(+). It functions in the pathway photosynthesis; photorespiration; 3-phospho-D-glycerate from glycine: step 4/4. In terms of biological role, catalyzes the concluding reaction of the photorespiratory C2 cycle, an indispensable ancillary metabolic pathway to the photosynthetic C3 cycle that enables land plants to grow in an oxygen-containing atmosphere. Functionally, cytoplasmic D-glycerate 3-kinase that constitutes a photorespiratory bypass that alleviates fluctuating light-induced photoinhibition. The protein is D-glycerate 3-kinase, chloroplastic of Arabidopsis thaliana (Mouse-ear cress).